The primary structure comprises 285 residues: Pantothenate synthetase (285 aa).

30-37 (MGNLHDGH) contacts ATP. Catalysis depends on H37, which acts as the Proton donor. Residue Q61 participates in (R)-pantoate binding. Q61 contacts beta-alanine. Residue 149 to 152 (GEKD) participates in ATP binding. Q155 provides a ligand contact to (R)-pantoate. ATP is bound by residues I178 and 186 to 189 (LSSR).

This sequence belongs to the pantothenate synthetase family. In terms of assembly, homodimer.

The protein resides in the cytoplasm. The enzyme catalyses (R)-pantoate + beta-alanine + ATP = (R)-pantothenate + AMP + diphosphate + H(+). The protein operates within cofactor biosynthesis; (R)-pantothenate biosynthesis; (R)-pantothenate from (R)-pantoate and beta-alanine: step 1/1. Catalyzes the condensation of pantoate with beta-alanine in an ATP-dependent reaction via a pantoyl-adenylate intermediate. The protein is Pantothenate synthetase of Buchnera aphidicola subsp. Acyrthosiphon pisum (strain Tuc7).